Here is a 610-residue protein sequence, read N- to C-terminus: Lipoprotein LpqB (610 aa).

Residues 1–27 (MGAEGGGRRRALRLGAYVGCGAVLLTG) form the signal peptide. Residue Cys-28 is the site of N-palmitoyl cysteine attachment. Cys-28 is lipidated: S-diacylglycerol cysteine.

Belongs to the LpqB lipoprotein family.

Its subcellular location is the cell membrane. The protein is Lipoprotein LpqB of Streptomyces avermitilis (strain ATCC 31267 / DSM 46492 / JCM 5070 / NBRC 14893 / NCIMB 12804 / NRRL 8165 / MA-4680).